The primary structure comprises 523 residues: Glycerate kinase (523 aa).

Ser60 carries the post-translational modification Phosphoserine. Lys200 bears the N6-acetyllysine mark.

It belongs to the glycerate kinase type-2 family.

The protein localises to the cytoplasm. It catalyses the reaction (R)-glycerate + ATP = (2R)-3-phosphoglycerate + ADP + H(+). This Bos taurus (Bovine) protein is Glycerate kinase (GLYCTK).